A 49-amino-acid polypeptide reads, in one-letter code: Large ribosomal subunit protein bL33B (49 aa).

The protein belongs to the bacterial ribosomal protein bL33 family.

In Bacillus velezensis (strain DSM 23117 / BGSC 10A6 / LMG 26770 / FZB42) (Bacillus amyloliquefaciens subsp. plantarum), this protein is Large ribosomal subunit protein bL33B.